A 273-amino-acid polypeptide reads, in one-letter code: Undecaprenyl-diphosphatase (273 aa).

Transmembrane regions (helical) follow at residues Ser6–Ser26, Ala45–Trp65, Leu90–His110, Leu116–Ala136, Tyr190–Leu210, Gly222–Ile242, and Ile252–Phe272.

The protein belongs to the UppP family.

Its subcellular location is the cell inner membrane. It carries out the reaction di-trans,octa-cis-undecaprenyl diphosphate + H2O = di-trans,octa-cis-undecaprenyl phosphate + phosphate + H(+). Functionally, catalyzes the dephosphorylation of undecaprenyl diphosphate (UPP). Confers resistance to bacitracin. This Escherichia coli O7:K1 (strain IAI39 / ExPEC) protein is Undecaprenyl-diphosphatase.